A 63-amino-acid chain; its full sequence is MVQEKKLRVTLVKSKYGRKPGHRECIEGLGLRRMHQTVEVTDTPANRGMIEKVSYLLMIDEEV.

This sequence belongs to the universal ribosomal protein uL30 family. In terms of assembly, part of the 50S ribosomal subunit.

This is Large ribosomal subunit protein uL30 from Coxiella burnetii (strain CbuK_Q154) (Coxiella burnetii (strain Q154)).